A 141-amino-acid chain; its full sequence is Large ribosomal subunit protein uL16 (141 aa).

This sequence belongs to the universal ribosomal protein uL16 family. Part of the 50S ribosomal subunit.

In terms of biological role, binds 23S rRNA and is also seen to make contacts with the A and possibly P site tRNAs. This chain is Large ribosomal subunit protein uL16, found in Campylobacter jejuni subsp. jejuni serotype O:6 (strain 81116 / NCTC 11828).